We begin with the raw amino-acid sequence, 349 residues long: Homeobox-leucine zipper protein HOX5 (349 aa).

The segment at residues 83–142 (APEKKRRLTAEQVQMLERSFEEENKLEPERKTELARRLGMAPRQVAVWFQNRRARWKTKQ) is a DNA-binding region (homeobox). The segment at 141–185 (KQLEHDFDRLKAAYDALAADHHALLSDNDRLRAQVISLTEKLQDK) is leucine-zipper. Positions 181–253 (KLQDKETSPS…GTNDDGDGGA (73 aa)) are disordered. The segment covering 188 to 198 (SPSSATITTAA) has biased composition (low complexity).

Belongs to the HD-ZIP homeobox family. Class I subfamily. In terms of assembly, homodimer. May form a heterodimer with HOX4. In terms of tissue distribution, expressed in seedlings, roots, leaves, nodes, internodes, flowers and embryo.

The protein resides in the nucleus. Functionally, probable transcription activator that binds to the DNA sequence 5'-CAAT[AT]ATTG-3'. The polypeptide is Homeobox-leucine zipper protein HOX5 (HOX5) (Oryza sativa subsp. japonica (Rice)).